The following is a 229-amino-acid chain: Dolichyldiphosphatase 1 (229 aa).

The next 4 helical transmembrane spans lie at 27–47 (LFNAYVTLIPIAIAIGVITLI), 94–114 (MPSSHSQFMFFFAVLMTLFYL), 120–140 (FGSKILPIISVTFLFFLAAGV), and 156–176 (FCGSFIGICLGFIWYGVIEYI).

This sequence belongs to the dolichyldiphosphatase family.

It is found in the endoplasmic reticulum membrane. The catalysed reaction is a di-trans,poly-cis-dolichyl diphosphate + H2O = a di-trans,poly-cis-dolichyl phosphate + phosphate + H(+). Its pathway is protein modification; protein glycosylation. Functionally, required for efficient N-glycosylation. Necessary for maintaining optimal levels of dolichol-linked oligosaccharides. Hydrolyzes dolichyl pyrophosphate at a very high rate and dolichyl monophosphate at a much lower rate. Does not act on phosphatidate. This Dictyostelium discoideum (Social amoeba) protein is Dolichyldiphosphatase 1 (dolpp1).